The chain runs to 494 residues: Succinoglycan biosynthesis transport protein ExoT (494 aa).

Transmembrane regions (helical) follow at residues 16-36 (WSVL…PILA), 44-64 (FGAV…GGAG), 82-102 (SVFW…FVFA), 105-125 (LATL…SLLI), 157-177 (LGAV…SLLA), 215-235 (FGMM…MVVI), 253-273 (FASI…FPTF), 297-317 (LLAP…LVLF), 321-341 (WAYA…LTPC), 343-363 (TFIP…WALI), 384-404 (AMIW…WVVF), 421-441 (PMIA…HFGA), and 447-467 (VLQL…LILL).

Belongs to the polysaccharide synthase family.

It is found in the cell membrane. It functions in the pathway glycan metabolism; exopolysaccharide biosynthesis. The chain is Succinoglycan biosynthesis transport protein ExoT (exoT) from Rhizobium meliloti (strain 1021) (Ensifer meliloti).